The chain runs to 241 residues: 1-(5-phosphoribosyl)-5-[(5-phosphoribosylamino)methylideneamino] imidazole-4-carboxamide isomerase (241 aa).

Asp-10 serves as the catalytic Proton acceptor. The Proton donor role is filled by Asp-131.

Belongs to the HisA/HisF family.

It is found in the cytoplasm. It carries out the reaction 1-(5-phospho-beta-D-ribosyl)-5-[(5-phospho-beta-D-ribosylamino)methylideneamino]imidazole-4-carboxamide = 5-[(5-phospho-1-deoxy-D-ribulos-1-ylimino)methylamino]-1-(5-phospho-beta-D-ribosyl)imidazole-4-carboxamide. Its pathway is amino-acid biosynthesis; L-histidine biosynthesis; L-histidine from 5-phospho-alpha-D-ribose 1-diphosphate: step 4/9. The sequence is that of 1-(5-phosphoribosyl)-5-[(5-phosphoribosylamino)methylideneamino] imidazole-4-carboxamide isomerase from Bifidobacterium adolescentis (strain ATCC 15703 / DSM 20083 / NCTC 11814 / E194a).